Here is a 276-residue protein sequence, read N- to C-terminus: Type III pantothenate kinase (276 aa).

Residue 18-25 participates in ATP binding; that stretch reads EIGNSRLH. Residues Y116 and 120–123 contribute to the substrate site; that span reads GIDR. D122 (proton acceptor) is an active-site residue. D142 lines the K(+) pocket. T145 is an ATP binding site. A substrate-binding site is contributed by T200.

The protein belongs to the type III pantothenate kinase family. In terms of assembly, homodimer. The cofactor is NH4(+). It depends on K(+) as a cofactor.

It localises to the cytoplasm. The catalysed reaction is (R)-pantothenate + ATP = (R)-4'-phosphopantothenate + ADP + H(+). It participates in cofactor biosynthesis; coenzyme A biosynthesis; CoA from (R)-pantothenate: step 1/5. Catalyzes the phosphorylation of pantothenate (Pan), the first step in CoA biosynthesis. This chain is Type III pantothenate kinase, found in Nostoc sp. (strain PCC 7120 / SAG 25.82 / UTEX 2576).